Reading from the N-terminus, the 502-residue chain is Lysine--tRNA ligase (502 aa).

The Mg(2+) site is built by glutamate 413 and glutamate 420.

This sequence belongs to the class-II aminoacyl-tRNA synthetase family. In terms of assembly, homodimer. The cofactor is Mg(2+).

The protein localises to the cytoplasm. It catalyses the reaction tRNA(Lys) + L-lysine + ATP = L-lysyl-tRNA(Lys) + AMP + diphosphate. This Haemophilus influenzae (strain PittEE) protein is Lysine--tRNA ligase.